The primary structure comprises 37 residues: Esculentin-2B (37 aa).

Cys31 and Cys37 are oxidised to a cystine.

The protein belongs to the frog skin active peptide (FSAP) family. Esculentin subfamily. As to expression, expressed by the skin glands.

It localises to the secreted. Functionally, shows antibacterial activity against representative Gram-negative and Gram-positive bacterial species, and hemolytic activity. This chain is Esculentin-2B, found in Pelophylax lessonae (Pool frog).